The following is a 215-amino-acid chain: uncharacterized protein (215 aa).

Residues Ser114, Asp162, and His194 each act as charge relay system in the active site.

It belongs to the AB hydrolase superfamily. AB hydrolase 2 family.

This is an uncharacterized protein from Rickettsia typhi (strain ATCC VR-144 / Wilmington).